Reading from the N-terminus, the 254-residue chain is MARNIQSLERAAAMLRLLAGGERRLGLSDIASTLGLAKGTAHGILRSLQAEGFVEQEPASGRYQLGAELLALGNSYLDVHELRARALVWTDDLARSSGEAAYLGVLHQQGVLIVHHVFRPDDSRQVLEVGAMHPLHSTAHGKVISAFDPVAHSEVLEGDRATLTGRTVTEAAAFEEVLDLTRARGWALDLEETWEGVASLAAPVHDRRRMAVGAVGVTGPVERLCPDGAPATELVTAVRDCAAAVSRDLGAGRF.

The region spanning 5–67 is the HTH iclR-type domain; the sequence is IQSLERAAAM…PASGRYQLGA (63 aa). Positions 27-46 form a DNA-binding region, H-T-H motif; that stretch reads LSDIASTLGLAKGTAHGILR. The 170-residue stretch at 82-251 folds into the IclR-ED domain; the sequence is LRARALVWTD…AAAVSRDLGA (170 aa).

May be an activator protein for the gylABX operon. This is Glycerol operon regulatory protein (gylR) from Streptomyces griseus.